A 326-amino-acid chain; its full sequence is tRNA-modifying protein YgfZ (326 aa).

Folate is bound by residues tryptophan 27 and tryptophan 189.

The protein belongs to the tRNA-modifying YgfZ family.

It is found in the cytoplasm. Functionally, folate-binding protein involved in regulating the level of ATP-DnaA and in the modification of some tRNAs. It is probably a key factor in regulatory networks that act via tRNA modification, such as initiation of chromosomal replication. This chain is tRNA-modifying protein YgfZ, found in Escherichia coli O6:K15:H31 (strain 536 / UPEC).